We begin with the raw amino-acid sequence, 331 residues long: Geranylgeranyl pyrophosphate synthase dpmaD (331 aa).

3 residues coordinate isopentenyl diphosphate: lysine 53, arginine 56, and histidine 85. 2 residues coordinate Mg(2+): aspartate 92 and aspartate 96. A dimethylallyl diphosphate-binding site is contributed by arginine 101. An isopentenyl diphosphate-binding site is contributed by arginine 102. Dimethylallyl diphosphate contacts are provided by lysine 179, threonine 180, and glutamine 213. Mg(2+) is bound at residue aspartate 216. The dimethylallyl diphosphate site is built by asparagine 220, lysine 230, and lysine 240.

The protein belongs to the FPP/GGPP synthase family. It depends on Mg(2+) as a cofactor.

It catalyses the reaction isopentenyl diphosphate + dimethylallyl diphosphate = (2E)-geranyl diphosphate + diphosphate. It carries out the reaction isopentenyl diphosphate + (2E)-geranyl diphosphate = (2E,6E)-farnesyl diphosphate + diphosphate. The enzyme catalyses isopentenyl diphosphate + (2E,6E)-farnesyl diphosphate = (2E,6E,10E)-geranylgeranyl diphosphate + diphosphate. The protein operates within secondary metabolite biosynthesis; terpenoid biosynthesis. Functionally, geranylgeranyl pyrophosphate synthase; part of the gene cluster that mediates the biosynthesis of the diterpenoid pyrones subglutinols A and B. The first step of the pathway is the synthesis of the alpha-pyrone moiety by the polyketide synthase dpmaA via condensation of one acetyl-CoA starter unit with 3 malonyl-CoA units and 2 methylations. The alpha-pyrone is then combined with geranylgeranyl pyrophosphate (GGPP) formed by the GGPP synthase dpmaD through the action of the prenyltransferase dpmaC to yield a linear alpha-pyrone diterpenoid. Subsequent steps in the diterpenoid pyrone biosynthetic pathway involve the decalin core formation, which is initiated by the epoxidation of the C10-C11 olefin by the FAD-dependent oxidoreductase dpmaE, and is followed by a cyclization cascade catalyzed by the terpene cyclase dpmaB. The dehydrogenase dpmaF is then involved in tetrahydrofuran (THF) ring formation at the C5 unit to complete the formation of subglutinols A and B. This Metarhizium anisopliae (Entomophthora anisopliae) protein is Geranylgeranyl pyrophosphate synthase dpmaD.